Reading from the N-terminus, the 265-residue chain is ATP synthase subunit a (265 aa).

The next 5 membrane-spanning stretches (helical) occupy residues 25 to 45 (FWAV…LFLW), 88 to 108 (IAPL…MDLI), 142 to 162 (DLNT…IYSI), 207 to 227 (LFGN…IGFW), and 233 to 253 (FAWA…FMML).

This sequence belongs to the ATPase A chain family. F-type ATPases have 2 components, CF(1) - the catalytic core - and CF(0) - the membrane proton channel. CF(1) has five subunits: alpha(3), beta(3), gamma(1), delta(1), epsilon(1). CF(0) has three main subunits: a(1), b(2) and c(9-12). The alpha and beta chains form an alternating ring which encloses part of the gamma chain. CF(1) is attached to CF(0) by a central stalk formed by the gamma and epsilon chains, while a peripheral stalk is formed by the delta and b chains.

The protein localises to the cell inner membrane. Key component of the proton channel; it plays a direct role in the translocation of protons across the membrane. The polypeptide is ATP synthase subunit a (Idiomarina loihiensis (strain ATCC BAA-735 / DSM 15497 / L2-TR)).